The primary structure comprises 489 residues: Phosphoglucosamine mutase (489 aa).

Residue S136 is the Phosphoserine intermediate of the active site. Mg(2+)-binding residues include S136, D275, D277, and D279. Residue S136 is modified to Phosphoserine.

Belongs to the phosphohexose mutase family. The cofactor is Mg(2+). Post-translationally, activated by phosphorylation.

The catalysed reaction is alpha-D-glucosamine 1-phosphate = D-glucosamine 6-phosphate. Catalyzes the conversion of glucosamine-6-phosphate to glucosamine-1-phosphate. This chain is Phosphoglucosamine mutase, found in Trichodesmium erythraeum (strain IMS101).